Consider the following 304-residue polypeptide: Calcium release-activated calcium channel protein 1 (304 aa).

The segment covering 1 to 11 (MHPEPAPPPSH) has biased composition (pro residues). A disordered region spans residues 1 to 50 (MHPEPAPPPSHSNPELPVSGGSSTSGSRRSRRRSGDGEPSGAPPLPPPPP). Residues 1-89 (MHPEPAPPPS…KLYLSRAKLK (89 aa)) lie on the Cytoplasmic side of the membrane. Residues 3–49 (PEPAPPPSHSNPELPVSGGSSTSGSRRSRRRSGDGEPSGAPPLPPPP) form a required for generation of inwardly rectifying CRAC currents region. The segment covering 12 to 27 (SNPELPVSGGSSTSGS) has biased composition (low complexity). Residues 39-61 (PSGAPPLPPPPPAVSYPDWIGQS) form an AKAP5 association region region. A compositionally biased stretch (pro residues) spans 41–50 (GAPPLPPPPP). Residues 72–92 (SMQALSWRKLYLSRAKLKASS) form an interaction with STIM1 region. Residues 90–107 (ASSRTSALLSGFAMVAMV) traverse the membrane as a helical segment. At 108 to 121 (EVQLDTDHDYPPGL) the chain is on the extracellular side. A helical membrane pass occupies residues 122–142 (LIVFSACTTVLVAVHLFALMI). Residues 143–175 (STCILPNIEAVSNVHNLNSVKESPHERMHRHIE) lie on the Cytoplasmic side of the membrane. A helical transmembrane segment spans residues 176–196 (LAWAFSTVIGTLLFLAEVVLL). Residues 197 to 237 (CWVKFLPLKRQAGQPSPTKPPAESVIVANHSDSSGITPGEA) lie on the Extracellular side of the membrane. The N-linked (GlcNAc...) asparagine glycan is linked to N225. A helical transmembrane segment spans residues 238-258 (AAIASTAIMVPCGLVFIVFAV). Over 259-304 (HFYRSLVSHKTDRQFQELNELAEFARLQDQLDHRGDHSLTPGTHYA) the chain is Cytoplasmic. Residues 275–295 (ELNELAEFARLQDQLDHRGDH) form an interaction with STIM1 region. Phosphothreonine is present on T298.

The protein belongs to the Orai family. Oligomerizes in homomeric and heteromeric ORAI complexes. Native CRAC channels most likely consist of hexameric ORAI heteromers, implying that diverse ORAI1, ORAI2 and ORAI3 subunit combinations with distinct biophysical properties can operate in a cell-type specific way. ARC channels are heteropentamers consisting of three ORAI1 and two ORAI3 subunits. Interacts with STIM1 and STIM2; this regulates channel activity. Interacts with CALM; this may displace STIM1 and STIM2 and might thereby modulate channel activity. Interacts (via N-terminus) with AKAP5 upon store depletion. Interacts with CRACR2A/EFCAB4B; the interaction is direct and takes place in absence of Ca(2+). Forms a complex with CRACR2A/EFCAB4B and STIM1 at low concentration of Ca(2+), the complex dissociates at elevated Ca(2+) concentrations. Interacts with ASPH (isoform 8). Interacts with SLC35G1. Interacts with UBQLN1. Interacts with ADCY8; interaction is calcium store depletion independent; interaction occurs in membrane raft; interaction increases markedly after store depletion; positively regulates SOCE-induced adenylate cyclase activity; contributes to the targeting of ADCY8 to discrete regions of the plasma membrane that are shielded from other calcium events. Interacts with EFHB; the interaction takes place upon Ca(2+)-store depletion. Interacts (via N- and C-termini) with ATP2C2 (via N-terminus); this interaction regulates Ca(2+) influx at the plasma membrane. Interacts with TSPAN18; this interaction regulates ORAI1 exit from the endoplasmic (ER), and/or Golgi, and trafficking to the cell surface. In terms of processing, N-glycosylated. N-glycosylation inhibits channel activity in T cells. Ubiquitinated. Post-translationally, cys-195 is oxidated, leading to inactivation of channel activity. Expressed in lactating mammary epithelium (at protein level).

It localises to the cell membrane. It is found in the basolateral cell membrane. The enzyme catalyses Ca(2+)(in) = Ca(2+)(out). With respect to regulation, oxidation at Cys-197 leads to inactivation of channel activity. In terms of biological role, pore-forming subunit of two major inward rectifying Ca(2+) channels at the plasma membrane: Ca(2+) release-activated Ca(2+) (CRAC) channels and arachidonate-regulated Ca(2+)-selective (ARC) channels. Assembles with ORAI2 and ORAI3 to form hexameric CRAC channels that mediate Ca(2+) influx upon depletion of endoplasmic reticulum Ca(2+) store and channel activation by Ca(2+) sensor STIM1, a process known as store-operated Ca(2+) entry (SOCE). Various pore subunit combinations may account for distinct CRAC channel spatiotemporal and cell-type specific dynamics. ORAI1 mainly contributes to the generation of Ca(2+) plateaus involved in sustained Ca(2+) entry and is dispensable for cytosolic Ca(2+) oscillations, whereas ORAI2 and ORAI3 generate oscillatory patterns. CRAC channels assemble in Ca(2+) signaling microdomains where Ca(2+) influx is coupled to calmodulin and calcineurin signaling and activation of NFAT transcription factors recruited to ORAI1 via AKAP5. Activates NFATC2/NFAT1 and NFATC3/NFAT4-mediated transcriptional responses. CRAC channels are the main pathway for Ca(2+) influx in T cells and promote the immune response to pathogens by activating NFAT-dependent cytokine and chemokine transcription. Assembles with ORAI3 to form channels that mediate store-independent Ca(2+) influx in response to inflammatory metabolites arachidonate or its derivative leukotriene C4, termed ARC and LRC channels respectively. Plays a prominent role in Ca(2+) influx at the basolateral membrane of mammary epithelial cells independently of the Ca(2+) content of endoplasmic reticulum or Golgi stores. May mediate transepithelial transport of large quantities of Ca(2+) for milk secretion. This is Calcium release-activated calcium channel protein 1 (Orai1) from Mus musculus (Mouse).